The sequence spans 301 residues: NAD kinase (301 aa).

Residue Asp73 is the Proton acceptor of the active site. NAD(+) contacts are provided by residues 73 to 74, 151 to 152, Arg179, Asp181, 192 to 197, Ala216, and Gln250; these read DG, ND, and TAYALS.

This sequence belongs to the NAD kinase family. It depends on a divalent metal cation as a cofactor.

It localises to the cytoplasm. The enzyme catalyses NAD(+) + ATP = ADP + NADP(+) + H(+). Involved in the regulation of the intracellular balance of NAD and NADP, and is a key enzyme in the biosynthesis of NADP. Catalyzes specifically the phosphorylation on 2'-hydroxyl of the adenosine moiety of NAD to yield NADP. The sequence is that of NAD kinase from Methylibium petroleiphilum (strain ATCC BAA-1232 / LMG 22953 / PM1).